We begin with the raw amino-acid sequence, 485 residues long: Peptidyl-prolyl isomerase CWC27 (485 aa).

Residues 11 to 167 (SSGLVDLVTS…YPIKLHEVRV (157 aa)) form the PPIase cyclophilin-type domain. A disordered region spans residues 173–485 (DDLQPRTTKK…PQQRRQRSII (313 aa)). 2 stretches are compositionally biased toward basic and acidic residues: residues 184-204 (RIAEERRKKHEMETRVAEEQK) and 236-247 (SSHDLLKDDKHL). Polar residues-rich tracts occupy residues 249 to 270 (RQTIETSKSTKANTPAVSANIS), 278 to 292 (AQSSSSTTPPAVTKQ), 315 to 325 (PSDQKASSSTG), and 353 to 370 (ALLSFQSRLRTRPSSTTP). The span at 381–398 (DEVEEEAGEYGASDDDDD) shows a compositional bias: acidic residues. The span at 428 to 465 (LDPRDHTDRERNPKAESSRDGKRGRDWVEHDRKYQNDR) shows a compositional bias: basic and acidic residues. Basic residues predominate over residues 466 to 485 (SRRHREHDKHPQQRRQRSII).

This sequence belongs to the cyclophilin-type PPIase family. CWC27 subfamily. As to quaternary structure, associated with the spliceosome.

Its subcellular location is the cytoplasm. It localises to the nucleus. It carries out the reaction [protein]-peptidylproline (omega=180) = [protein]-peptidylproline (omega=0). In terms of biological role, PPIases accelerate the folding of proteins. It catalyzes the cis-trans isomerization of proline imidic peptide bonds in oligopeptides. Involved in pre-mRNA splicing. The sequence is that of Peptidyl-prolyl isomerase CWC27 (CWC27) from Mycosarcoma maydis (Corn smut fungus).